A 270-amino-acid chain; its full sequence is Acyl-[acyl-carrier-protein]--UDP-N-acetylglucosamine O-acyltransferase (270 aa).

It belongs to the transferase hexapeptide repeat family. LpxA subfamily. Homotrimer.

The protein resides in the cytoplasm. It carries out the reaction a (3R)-hydroxyacyl-[ACP] + UDP-N-acetyl-alpha-D-glucosamine = a UDP-3-O-[(3R)-3-hydroxyacyl]-N-acetyl-alpha-D-glucosamine + holo-[ACP]. Its pathway is glycolipid biosynthesis; lipid IV(A) biosynthesis; lipid IV(A) from (3R)-3-hydroxytetradecanoyl-[acyl-carrier-protein] and UDP-N-acetyl-alpha-D-glucosamine: step 1/6. Its function is as follows. Involved in the biosynthesis of lipid A, a phosphorylated glycolipid that anchors the lipopolysaccharide to the outer membrane of the cell. This Bartonella tribocorum (strain CIP 105476 / IBS 506) protein is Acyl-[acyl-carrier-protein]--UDP-N-acetylglucosamine O-acyltransferase.